A 479-amino-acid chain; its full sequence is GTPase Der (479 aa).

EngA-type G domains are found at residues 3–167 (FTLA…EAAA) and 191–366 (LQIA…ATWN). Residues 9 to 16 (GRPNVGKS), 56 to 60 (DTAGL), 119 to 122 (NKAE), 197 to 204 (GRPNAGKS), 244 to 248 (DTAGM), and 309 to 312 (NKWD) contribute to the GTP site. Residues 367 to 453 (TRISTARLNQ…RLWMRSQADD (87 aa)) enclose the KH-like domain. Residues 449–479 (SQADDNPYKNRKKSTPSRLNKHVRKGETKKG) form a disordered region. Residues 457 to 472 (KNRKKSTPSRLNKHVR) show a composition bias toward basic residues.

It belongs to the TRAFAC class TrmE-Era-EngA-EngB-Septin-like GTPase superfamily. EngA (Der) GTPase family. Associates with the 50S ribosomal subunit.

Functionally, GTPase that plays an essential role in the late steps of ribosome biogenesis. In Jannaschia sp. (strain CCS1), this protein is GTPase Der.